Here is a 487-residue protein sequence, read N- to C-terminus: UDP-N-acetylmuramoyl-L-alanyl-D-glutamate--2,6-diaminopimelate ligase (487 aa).

Ser30 lines the UDP-N-acetyl-alpha-D-muramoyl-L-alanyl-D-glutamate pocket. 109–115 is an ATP binding site; that stretch reads GTNGKTS. Residues 151 to 152, Ser178, and Arg186 contribute to the UDP-N-acetyl-alpha-D-muramoyl-L-alanyl-D-glutamate site; that span reads TT. Lys218 is modified (N6-carboxylysine). Residues Arg379, 403–406, Gly455, and Glu459 contribute to the meso-2,6-diaminopimelate site; that span reads DNPR. A Meso-diaminopimelate recognition motif motif is present at residues 403–406; sequence DNPR.

This sequence belongs to the MurCDEF family. MurE subfamily. Requires Mg(2+) as cofactor. Carboxylation is probably crucial for Mg(2+) binding and, consequently, for the gamma-phosphate positioning of ATP.

Its subcellular location is the cytoplasm. The catalysed reaction is UDP-N-acetyl-alpha-D-muramoyl-L-alanyl-D-glutamate + meso-2,6-diaminopimelate + ATP = UDP-N-acetyl-alpha-D-muramoyl-L-alanyl-gamma-D-glutamyl-meso-2,6-diaminopimelate + ADP + phosphate + H(+). The protein operates within cell wall biogenesis; peptidoglycan biosynthesis. In terms of biological role, catalyzes the addition of meso-diaminopimelic acid to the nucleotide precursor UDP-N-acetylmuramoyl-L-alanyl-D-glutamate (UMAG) in the biosynthesis of bacterial cell-wall peptidoglycan. The polypeptide is UDP-N-acetylmuramoyl-L-alanyl-D-glutamate--2,6-diaminopimelate ligase (Alkaliphilus oremlandii (strain OhILAs) (Clostridium oremlandii (strain OhILAs))).